A 493-amino-acid polypeptide reads, in one-letter code: Leucine-rich repeat-containing protein 14 (493 aa).

The LRR 1; degenerate repeat unit spans residues Lys111 to Thr146. The LRR 2; degenerate repeat unit spans residues Arg194–Asp218. Residues Ala219–Arg246 form an LRR 3; degenerate repeat. The stretch at Phe247–Arg282 is one LRR 4; degenerate repeat. LRR repeat units follow at residues Phe283–Leu307, Gln308–Lys339, Lys340–Leu360, Ala364–Arg391, and Cys392–Asp416.

The protein belongs to the PRAME family. LRRC14 subfamily. In terms of assembly, interacts with IKBKB; disrupts IKBKB-IKBKG interaction preventing I-kappa-B-kinase (IKK) core complex formation and leading to a decrease of IKBKB phosphorylation and NF-kappaB activation. Interacts with CHUK.

The protein localises to the cytoplasm. Negatively regulates Toll-like receptor-mediated NF-kappa-B signaling by disrupting IKK core complex formation through interaction with IKBKB. This chain is Leucine-rich repeat-containing protein 14, found in Rattus norvegicus (Rat).